Here is a 422-residue protein sequence, read N- to C-terminus: MSEFNFISRLHNRGLISHITNEDNLSKLIENKSISLYCGFDPTEESLHIGHLLPLIMLKRFQIAGHRPIILIGGATSLIGDPSFKEKERVFNSNYNVNIWTEKITKQISCFLDFNCGKNSAVLLNNNTWFKQINILSFLRDVGKYFSVNTMINRAAVKQRITRPDQGISFTEFSYNLLQAYDFFILNQQYQVDLQIGGADQWGNISSGMHLIHRKTKRVVYGLTVPLLIQSNGIKFGKTESGTVWLDSNKTSPYKFYQFWMNIEDANVYYFLKLFTFIKVSEINKLEKNKNINNQIINDKSLLAKHITQLVHGKEKLLAAERITKFLFLKNTTHIEESDLQQLKQDGIPFIEVSNVKDLQEALVLTSLAQSRTQAKNMIISNSISINTEKIRKNHIFHEKDKLFGKFTLLSRGKKQHSLLCW.

Tyrosine 37 is a binding site for L-tyrosine. Positions 42 to 51 (PTEESLHIGH) match the 'HIGH' region motif. Positions 175 and 179 each coordinate L-tyrosine. Residues 235-239 (KFGKT) carry the 'KMSKS' region motif. Lysine 238 serves as a coordination point for ATP. In terms of domain architecture, S4 RNA-binding spans 357-414 (KDLQEALVLTSLAQSRTQAKNMIISNSISINTEKIRKNHIFHEKDKLFGKFTLLSRGK).

This sequence belongs to the class-I aminoacyl-tRNA synthetase family. TyrS type 1 subfamily. Homodimer.

The protein resides in the cytoplasm. It carries out the reaction tRNA(Tyr) + L-tyrosine + ATP = L-tyrosyl-tRNA(Tyr) + AMP + diphosphate + H(+). In terms of biological role, catalyzes the attachment of tyrosine to tRNA(Tyr) in a two-step reaction: tyrosine is first activated by ATP to form Tyr-AMP and then transferred to the acceptor end of tRNA(Tyr). The polypeptide is Tyrosine--tRNA ligase (Buchnera aphidicola subsp. Acyrthosiphon pisum (strain Tuc7)).